Here is a 92-residue protein sequence, read N- to C-terminus: Major allergen I polypeptide chain 1 (92 aa).

The N-terminal stretch at 1–22 (MKGACVLVLLWAALLLISGGNC) is a signal peptide.

This sequence belongs to the secretoglobin family. Heterotetramer composed of two non-covalently linked disulfide-linked heterodimer of chains 1 and 2. As to expression, saliva and sebaceous glands.

It localises to the secreted. The sequence is that of Major allergen I polypeptide chain 1 (CH1) from Felis catus (Cat).